We begin with the raw amino-acid sequence, 100 residues long: Small ribosomal subunit protein uS14c (100 aa).

It belongs to the universal ribosomal protein uS14 family. Part of the 30S ribosomal subunit.

The protein resides in the plastid. The protein localises to the chloroplast. In terms of biological role, binds 16S rRNA, required for the assembly of 30S particles. In Stigeoclonium helveticum (Green alga), this protein is Small ribosomal subunit protein uS14c.